The following is a 1036-amino-acid chain: Phytosulfokine receptor 2 (1036 aa).

Residues 1 to 16 (MVIILLLVFFVGSSVS) form the signal peptide. Residues N36 and N45 are each glycosylated (N-linked (GlcNAc...) asparagine). LRR repeat units follow at residues 89–111 (ELRVLDLSRNQLKGEVPAEISKL), 113–136 (QLQVLDLSHNLLSGSVLGVVSGLK), 137–159 (LIQSLNISSNSLSGKLSDVGVFP), 160–182 (GLVMLNVSNNLFEGEIHPELCSS), 185–207 (GIQVLDLSMNRLVGNLDGLYNCS), 209–231 (SIQQLHIDSNRLTGQLPDYLYSI), 233–256 (ELEQLSLSGNYLSGELSKNLSNLS), 257–279 (GLKSLLISENRFSDVIPDVFGNL), 281–303 (QLEHLDVSSNKFSGRFPPSLSQC), 305–326 (KLRVLDLRNNSLSGSINLNFTG), 329–351 (DLCVLDLASNHFSGPLPDSLGHC), 353–375 (KMKILSLAKNEFRGKIPDTFKNL), 377–398 (SLLFLSLSNNSFVDFSETMNVL), 403–423 (NLSTLILSKNFIGEEIPNNVT), 427–450 (NLAILALGNCGLRGQIPSWLLNCK), 451–473 (KLEVLDLSWNHFYGTIPHWIGKM), and 475–498 (SLFYIDFSNNTLTGAIPVAITELK). 3 N-linked (GlcNAc...) asparagine glycosylation sites follow: N142, N165, and N205. N-linked (GlcNAc...) asparagine glycosylation is found at N251, N254, and N278. 2 N-linked (GlcNAc...) asparagine glycosylation sites follow: N313 and N323. N-linked (GlcNAc...) asparagine glycosylation is found at N385, N403, and N421. 5 N-linked (GlcNAc...) asparagine glycosylation sites follow: N483, N504, N523, N549, and N571. LRR repeat units follow at residues 561–583 (ELHMLDLSRNNFTGTIPDSISGL) and 585–606 (NLEVLDLSYNHLYGSIPLSFQS). The helical transmembrane segment at 680–700 (IVVLTISLAIGITLLLSVILL) threads the bilayer. Residue T751 is modified to Phosphothreonine. In terms of domain architecture, Protein kinase spans 754 to 1025 (FSQANIIGCG…PLIEEVVTWL (272 aa)). ATP contacts are provided by residues 760–768 (IGCGGFGLV) and K782. Phosphotyrosine occurs at positions 827 and 867. The active-site Proton acceptor is D880. The residue at position 922 (Y922) is a Phosphotyrosine. Residues 995 to 1020 (RTVLEMLEIACKCIDHEPRRRPLIEE) form an LRR 20 repeat.

Belongs to the protein kinase superfamily. Ser/Thr protein kinase family.

The protein localises to the cell membrane. The enzyme catalyses L-seryl-[protein] + ATP = O-phospho-L-seryl-[protein] + ADP + H(+). It carries out the reaction L-threonyl-[protein] + ATP = O-phospho-L-threonyl-[protein] + ADP + H(+). Phytosulfokine receptor with a serine/threonine-protein kinase activity. This chain is Phytosulfokine receptor 2 (PSKR2), found in Arabidopsis thaliana (Mouse-ear cress).